We begin with the raw amino-acid sequence, 118 residues long: Large ribosomal subunit protein uL22 (118 aa).

Belongs to the universal ribosomal protein uL22 family. In terms of assembly, part of the 50S ribosomal subunit.

Functionally, this protein binds specifically to 23S rRNA; its binding is stimulated by other ribosomal proteins, e.g. L4, L17, and L20. It is important during the early stages of 50S assembly. It makes multiple contacts with different domains of the 23S rRNA in the assembled 50S subunit and ribosome. Its function is as follows. The globular domain of the protein is located near the polypeptide exit tunnel on the outside of the subunit, while an extended beta-hairpin is found that lines the wall of the exit tunnel in the center of the 70S ribosome. This is Large ribosomal subunit protein uL22 from Leuconostoc mesenteroides subsp. mesenteroides (strain ATCC 8293 / DSM 20343 / BCRC 11652 / CCM 1803 / JCM 6124 / NCDO 523 / NBRC 100496 / NCIMB 8023 / NCTC 12954 / NRRL B-1118 / 37Y).